The chain runs to 368 residues: 3-dehydroquinate synthase (368 aa).

NAD(+)-binding positions include 112 to 116, 136 to 137, K149, K158, and 176 to 179; these read GVIGD, TT, and TLIT. 3 residues coordinate Zn(2+): E191, H256, and H273.

This sequence belongs to the sugar phosphate cyclases superfamily. Dehydroquinate synthase family. Co(2+) is required as a cofactor. It depends on Zn(2+) as a cofactor. The cofactor is NAD(+).

It is found in the cytoplasm. The catalysed reaction is 7-phospho-2-dehydro-3-deoxy-D-arabino-heptonate = 3-dehydroquinate + phosphate. It participates in metabolic intermediate biosynthesis; chorismate biosynthesis; chorismate from D-erythrose 4-phosphate and phosphoenolpyruvate: step 2/7. Functionally, catalyzes the conversion of 3-deoxy-D-arabino-heptulosonate 7-phosphate (DAHP) to dehydroquinate (DHQ). The polypeptide is 3-dehydroquinate synthase (Prochlorococcus marinus (strain NATL2A)).